Consider the following 423-residue polypeptide: O-methyltransferase aoiF (423 aa).

Residue Asp273 participates in S-adenosyl-L-methionine binding. His324 serves as the catalytic Proton acceptor.

Belongs to the class I-like SAM-binding methyltransferase superfamily. Cation-independent O-methyltransferase family.

It functions in the pathway secondary metabolite biosynthesis. Its function is as follows. O-methyltransferase; part of the gene cluster that mediates the biosynthesis of a methylated derivative of known natural products orthosporin and diaporthin. Within the pathway, aoiF catalyzes the biotransformation of orthosporin to diaporthin but also of diaporthin to the final product, by performing a tandem methylation of the polyketide core. Orthosporin is produced by an oxidoreductase that has still to be identified and that catalyzes the stereospecific reduction of the carbonyl moiety of the hexaketide isocoumarin scaffold produced by the non-reducing polyketide synthase aoiG to generate the S-configured secondary alcohol at C-11. This chain is O-methyltransferase aoiF, found in Aspergillus oryzae (strain ATCC 42149 / RIB 40) (Yellow koji mold).